The primary structure comprises 460 residues: MTHLKITGMTCDSCAAHVKEALEKVPGVQSAIVSYAKGAAQLALDPGTAPDALTAAVAGLGYKAMLADAPPTDNRTGLFDKVRGWMGAADKGSGAERPLQVAVIGSGGAAMAAALKAVEQGAQVTLIERGTIGGTCVNVGCVPSKIMIRAAHIAHLRRESPFDGGMPPTPPTILRERLLAQQQARVEELRHAKYEGILDGNSAITVRHGEARFKDDRDLSVSLNEGGERVVMFDRCLVATGASPAMPPIPGLKESPYWTSTEALVSDTIPERLAVIGSSVVALELAQAFARLGSQVTILARNTLFFRDDPSIGEAVTAAFRAEGIKVLEHTQASQVAHVNGEDPQVATVGYSEAEAHHDGIETDSRTLTLDNVPRALANFDTRGFIKLVIEEGSGRLIGVQVVAPEAGELIQTAVLAIRNRMTVQELADQLFPYLTMVEGLKLAAQTFTKDVKQLSCCAG.

The 65-residue stretch at Met1–Met65 folds into the HMA domain. A metal cation contacts are provided by Cys11 and Cys14. 3 residues coordinate FAD: Ala110, Gly130, and Thr135. A disulfide bond links Cys136 and Cys141. Lys145 and Ala211 together coordinate FAD. Residues Cys457 and Cys458 each contribute to the Hg(2+) site.

It belongs to the class-I pyridine nucleotide-disulfide oxidoreductase family. As to quaternary structure, homodimer. The cofactor is FAD.

The catalysed reaction is Hg + NADP(+) + H(+) = Hg(2+) + NADPH. Its function is as follows. Resistance to Hg(2+) in bacteria appears to be governed by a specialized system which includes mercuric reductase. MerA protein is responsible for volatilizing mercury as Hg(0). This Serratia marcescens protein is Mercuric reductase (merA).